A 929-amino-acid polypeptide reads, in one-letter code: Leucine--tRNA ligase (929 aa).

The 'HIGH' region signature appears at 42-52; sequence PYPSGNLHMGH. The short motif at 614-618 is the 'KMSKS' region element; sequence KMSKS. Residue K617 coordinates ATP.

Belongs to the class-I aminoacyl-tRNA synthetase family.

The protein localises to the cytoplasm. It carries out the reaction tRNA(Leu) + L-leucine + ATP = L-leucyl-tRNA(Leu) + AMP + diphosphate. This Trichodesmium erythraeum (strain IMS101) protein is Leucine--tRNA ligase.